A 360-amino-acid polypeptide reads, in one-letter code: 3-dehydroquinate synthase (360 aa).

NAD(+) contacts are provided by residues 70 to 75, 104 to 108, 128 to 129, lysine 141, and lysine 150; these read DGEKYK, GVIGD, and TT. Zn(2+) contacts are provided by glutamate 183, histidine 246, and histidine 263.

It belongs to the sugar phosphate cyclases superfamily. Dehydroquinate synthase family. Co(2+) serves as cofactor. Zn(2+) is required as a cofactor. It depends on NAD(+) as a cofactor.

Its subcellular location is the cytoplasm. It carries out the reaction 7-phospho-2-dehydro-3-deoxy-D-arabino-heptonate = 3-dehydroquinate + phosphate. It participates in metabolic intermediate biosynthesis; chorismate biosynthesis; chorismate from D-erythrose 4-phosphate and phosphoenolpyruvate: step 2/7. In terms of biological role, catalyzes the conversion of 3-deoxy-D-arabino-heptulosonate 7-phosphate (DAHP) to dehydroquinate (DHQ). This Acinetobacter baumannii (strain AYE) protein is 3-dehydroquinate synthase.